A 508-amino-acid chain; its full sequence is Photosystem II CP47 reaction center protein (508 aa).

Helical transmembrane passes span 21-36 (SVHI…WAGS), 101-115 (IVFS…IWHW), 140-156 (GIHL…FGAF), 203-218 (IAAG…FHLS), 237-252 (VLSS…AFVV), and 457-472 (TFAL…HGAR).

This sequence belongs to the PsbB/PsbC family. PsbB subfamily. As to quaternary structure, PSII is composed of 1 copy each of membrane proteins PsbA, PsbB, PsbC, PsbD, PsbE, PsbF, PsbH, PsbI, PsbJ, PsbK, PsbL, PsbM, PsbT, PsbX, PsbY, PsbZ, Psb30/Ycf12, at least 3 peripheral proteins of the oxygen-evolving complex and a large number of cofactors. It forms dimeric complexes. Binds multiple chlorophylls. PSII binds additional chlorophylls, carotenoids and specific lipids. serves as cofactor.

Its subcellular location is the plastid. It localises to the chloroplast thylakoid membrane. One of the components of the core complex of photosystem II (PSII). It binds chlorophyll and helps catalyze the primary light-induced photochemical processes of PSII. PSII is a light-driven water:plastoquinone oxidoreductase, using light energy to abstract electrons from H(2)O, generating O(2) and a proton gradient subsequently used for ATP formation. The polypeptide is Photosystem II CP47 reaction center protein (Zea mays (Maize)).